A 754-amino-acid chain; its full sequence is Ribosomal RNA large subunit methyltransferase K/L (754 aa).

Residues 46–157 (TAYRLCLWSR…RGEAILSLDL (112 aa)) enclose the THUMP domain.

Belongs to the methyltransferase superfamily. RlmKL family.

It localises to the cytoplasm. It carries out the reaction guanosine(2445) in 23S rRNA + S-adenosyl-L-methionine = N(2)-methylguanosine(2445) in 23S rRNA + S-adenosyl-L-homocysteine + H(+). It catalyses the reaction guanosine(2069) in 23S rRNA + S-adenosyl-L-methionine = N(2)-methylguanosine(2069) in 23S rRNA + S-adenosyl-L-homocysteine + H(+). In terms of biological role, specifically methylates the guanine in position 2445 (m2G2445) and the guanine in position 2069 (m7G2069) of 23S rRNA. In Pseudomonas fluorescens (strain ATCC BAA-477 / NRRL B-23932 / Pf-5), this protein is Ribosomal RNA large subunit methyltransferase K/L.